We begin with the raw amino-acid sequence, 290 residues long: Undecaprenyl-diphosphatase (290 aa).

6 consecutive transmembrane segments (helical) span residues Pro-39 to Phe-59, Ala-85 to Leu-105, Leu-118 to Ala-138, Ser-202 to Gly-222, Pro-230 to Met-250, and Phe-261 to Leu-281.

Belongs to the UppP family.

The protein localises to the cell membrane. The enzyme catalyses di-trans,octa-cis-undecaprenyl diphosphate + H2O = di-trans,octa-cis-undecaprenyl phosphate + phosphate + H(+). Functionally, catalyzes the dephosphorylation of undecaprenyl diphosphate (UPP). Confers resistance to bacitracin. The sequence is that of Undecaprenyl-diphosphatase from Streptomyces griseus subsp. griseus (strain JCM 4626 / CBS 651.72 / NBRC 13350 / KCC S-0626 / ISP 5235).